Reading from the N-terminus, the 398-residue chain is 1-deoxy-D-xylulose 5-phosphate reductoisomerase (398 aa).

Residues Thr11, Gly12, Ser13, Ile14, and Asn125 each contribute to the NADPH site. Residue Lys126 coordinates 1-deoxy-D-xylulose 5-phosphate. Glu127 lines the NADPH pocket. Mn(2+) is bound at residue Asp151. 1-deoxy-D-xylulose 5-phosphate-binding residues include Ser152, Glu153, Ser186, and His209. Residue Glu153 participates in Mn(2+) binding. Gly215 is an NADPH binding site. 1-deoxy-D-xylulose 5-phosphate-binding residues include Ser222, Asn227, Lys228, and Glu231. Glu231 serves as a coordination point for Mn(2+).

The protein belongs to the DXR family. Mg(2+) is required as a cofactor. Mn(2+) serves as cofactor.

It carries out the reaction 2-C-methyl-D-erythritol 4-phosphate + NADP(+) = 1-deoxy-D-xylulose 5-phosphate + NADPH + H(+). It functions in the pathway isoprenoid biosynthesis; isopentenyl diphosphate biosynthesis via DXP pathway; isopentenyl diphosphate from 1-deoxy-D-xylulose 5-phosphate: step 1/6. Its function is as follows. Catalyzes the NADPH-dependent rearrangement and reduction of 1-deoxy-D-xylulose-5-phosphate (DXP) to 2-C-methyl-D-erythritol 4-phosphate (MEP). The chain is 1-deoxy-D-xylulose 5-phosphate reductoisomerase from Acinetobacter baumannii (strain AB307-0294).